Here is a 212-residue protein sequence, read N- to C-terminus: uncharacterized protein (212 aa).

A run of 2 helical transmembrane segments spans residues 54–74 (LCFALTLLLTLGGTISAGYAG) and 79–99 (WIICGIGLGIIVLTLILALLL).

The protein resides in the cell membrane. This is an uncharacterized protein from Chlamydia pneumoniae (Chlamydophila pneumoniae).